We begin with the raw amino-acid sequence, 92 residues long: Phosphoribosyl-ATP pyrophosphatase (92 aa).

Belongs to the PRA-PH family.

It is found in the cytoplasm. The catalysed reaction is 1-(5-phospho-beta-D-ribosyl)-ATP + H2O = 1-(5-phospho-beta-D-ribosyl)-5'-AMP + diphosphate + H(+). The protein operates within amino-acid biosynthesis; L-histidine biosynthesis; L-histidine from 5-phospho-alpha-D-ribose 1-diphosphate: step 2/9. This Leptospira interrogans serogroup Icterohaemorrhagiae serovar copenhageni (strain Fiocruz L1-130) protein is Phosphoribosyl-ATP pyrophosphatase.